The following is a 404-amino-acid chain: MRSQPHVLGIVLAGGEGKRLYPLTADRAKPAVPFGGAYRLIDFVLSNLVNAGYLRICVLTQYKSHSLDRHISQTWRLSGFAGEYITPVPAQQRLGPRWYTGSADAILQSLNLVYDEDPEYIVVFGADHVYRMDPEQMVQHHIESGAGVTVAGIRVPRSEAFAFGCIDSDESGRITQFLEKPAHPPGTPDDPNSTFASMGNYVFTTKVLVDAIRADSENSDSDHDMGGDIIPALVAAGEASVYDFKDNVVPGATDRDRGYWRDVGTLDAFYDAHMDLVSVHPIFNLYNRRWPIRGATENLAPAKFVKGGLAQESVVGAGSILSAATVRNSVLSSNVMIEDGATVEGSVLMPGVRIGKGAVVRRAILDKNVVVGDGEIIGVDLERDRERFAVSQGGVVAIGKGVWI.

Alpha-D-glucose 1-phosphate contacts are provided by residues Tyr99, Gly164, Glu179–Lys180, and Ser197.

It belongs to the bacterial/plant glucose-1-phosphate adenylyltransferase family. Homotetramer.

It carries out the reaction alpha-D-glucose 1-phosphate + ATP + H(+) = ADP-alpha-D-glucose + diphosphate. Its pathway is glycan biosynthesis; glycogen biosynthesis. Its function is as follows. Involved in the biosynthesis of ADP-glucose, a building block required for the elongation reactions to produce glycogen. Catalyzes the reaction between ATP and alpha-D-glucose 1-phosphate (G1P) to produce pyrophosphate and ADP-Glc. The chain is Glucose-1-phosphate adenylyltransferase from Rhodococcus erythropolis (strain PR4 / NBRC 100887).